A 402-amino-acid polypeptide reads, in one-letter code: Digeranylgeranylglycerophospholipid reductase (402 aa).

Gly-15, Glu-34, Cys-45, Ala-46, Gly-48, Arg-99, Ala-123, Asp-280, Gly-292, and Ile-293 together coordinate FAD.

This sequence belongs to the geranylgeranyl reductase family. DGGGPL reductase subfamily. The cofactor is FAD.

The catalysed reaction is a 2,3-bis-O-phytanyl-sn-glycerol 1-phospholipid + 8 oxidized 2[4Fe-4S]-[ferredoxin] = a 2,3-bis-O-(geranylgeranyl)-sn-glycerol 1-phospholipid + 8 reduced 2[4Fe-4S]-[ferredoxin] + 16 H(+). It catalyses the reaction 2,3-bis-O-(phytanyl)-sn-glycerol 1-phosphate + 8 oxidized 2[4Fe-4S]-[ferredoxin] = 2,3-bis-O-(geranylgeranyl)-sn-glycerol 1-phosphate + 8 reduced 2[4Fe-4S]-[ferredoxin] + 16 H(+). It carries out the reaction a 2,3-bis-O-phytanyl-sn-glycerol 1-phospholipid + 8 A = a 2,3-bis-O-(geranylgeranyl)-sn-glycerol 1-phospholipid + 8 AH2. The enzyme catalyses CDP-2,3-bis-O-(geranylgeranyl)-sn-glycerol + 8 AH2 = CDP-2,3-bis-O-(phytanyl)-sn-glycerol + 8 A. The catalysed reaction is archaetidylserine + 8 AH2 = 2,3-bis-O-phytanyl-sn-glycero-3-phospho-L-serine + 8 A. It functions in the pathway membrane lipid metabolism; glycerophospholipid metabolism. Its function is as follows. Is involved in the reduction of 2,3-digeranylgeranylglycerophospholipids (unsaturated archaeols) into 2,3-diphytanylglycerophospholipids (saturated archaeols) in the biosynthesis of archaeal membrane lipids. Catalyzes the formation of archaetidic acid (2,3-di-O-phytanyl-sn-glyceryl phosphate) from 2,3-di-O-geranylgeranylglyceryl phosphate (DGGGP) via the hydrogenation of each double bond of the isoprenoid chains. Is also probably able to reduce double bonds of geranyl groups in CDP-2,3-bis-O-(geranylgeranyl)-sn-glycerol and archaetidylserine, thus acting at various stages in the biosynthesis of archaeal membrane lipids. The sequence is that of Digeranylgeranylglycerophospholipid reductase from Methanospirillum hungatei JF-1 (strain ATCC 27890 / DSM 864 / NBRC 100397 / JF-1).